A 210-amino-acid chain; its full sequence is Large ribosomal subunit protein uL4 (210 aa).

A compositionally biased stretch (polar residues) spans 44–54 (KRQGTASTLTR). The segment at 44–94 (KRQGTASTLTRSEVRGGGRKPYKQKGTGRARQGSIRTPLRPGGGVIFGPKP) is disordered. Residues 60–71 (GGRKPYKQKGTG) show a composition bias toward basic residues.

It belongs to the universal ribosomal protein uL4 family. As to quaternary structure, part of the 50S ribosomal subunit.

One of the primary rRNA binding proteins, this protein initially binds near the 5'-end of the 23S rRNA. It is important during the early stages of 50S assembly. It makes multiple contacts with different domains of the 23S rRNA in the assembled 50S subunit and ribosome. In terms of biological role, forms part of the polypeptide exit tunnel. The sequence is that of Large ribosomal subunit protein uL4 from Prochlorococcus marinus subsp. pastoris (strain CCMP1986 / NIES-2087 / MED4).